We begin with the raw amino-acid sequence, 317 residues long: Melanocyte-stimulating hormone receptor (317 aa).

Positions 1–26 (MPVQGSPRSLLGAVNSTPTATPHLRP) are disordered. Topologically, residues 1–37 (MPVQGSPRSLLGAVNSTPTATPHLRPAANQTGPQCLE) are extracellular. Asn-29 carries N-linked (GlcNAc...) asparagine glycosylation. A helical transmembrane segment spans residues 38–63 (VSIPDGLFLCLGLVSLVENTLVVAAI). At 64-72 (AKNRNLHSP) the chain is on the cytoplasmic side. The helical transmembrane segment at 73–93 (MYCFVCCLALSDLLVSVSSVL) threads the bilayer. Topologically, residues 94-118 (ETAVLLLLGAGALAAQATVVQLLGN) are extracellular. Residues 119 to 140 (VIDVLLCSSMVSSLFFLGAIAM) traverse the membrane as a helical segment. Residues 141–163 (DRYISIFYALRYHSIVTLARARR) are Cytoplasmic-facing. The chain crosses the membrane as a helical span at residues 164–183 (AIAAIWAASMLSSTLFIAYC). At 184-191 (DHTAALLC) the chain is on the extracellular side. Residues 192–211 (LVVFFLAMLVLMAVLYVHML) form a helical membrane-spanning segment. At 212–240 (TQACQHAQGIARLHKRQRPVQQGWGLKGA) the chain is on the cytoplasmic side. The chain crosses the membrane as a helical span at residues 241 to 266 (ATLAILLGVFFLCWGPFFLHLTLIAV). Residues 267–279 (CPQHPTCSCIFKN) lie on the Extracellular side of the membrane. A helical membrane pass occupies residues 280–300 (FRLFLALIVCNAIVDPLIYAF). Residues 301-317 (RSQELCKTLKELLLFSW) lie on the Cytoplasmic side of the membrane.

The protein belongs to the G-protein coupled receptor 1 family. Interacts with MGRN1, but does not undergo MGRN1-mediated ubiquitination; this interaction competes with GNAS-binding and thus inhibits agonist-induced cAMP production. Interacts with OPN3; the interaction results in a decrease in MC1R-mediated cAMP signaling and ultimately a decrease in melanin production in melanocytes.

Its subcellular location is the cell membrane. Receptor for MSH (alpha, beta and gamma) and ACTH. The activity of this receptor is mediated by G proteins which activate adenylate cyclase. Mediates melanogenesis, the production of eumelanin (black/brown) and phaeomelanin (red/yellow), via regulation of cAMP signaling in melanocytes. The polypeptide is Melanocyte-stimulating hormone receptor (MC1R) (Hapalemur griseus (Gray gentle lemur)).